The primary structure comprises 190 residues: Somatotropin (190 aa).

Residues 1 to 17 form the signal peptide; it reads MNRVILLLSVMCVGVSS. Intrachain disulfides connect C69–C163 and C180–C188.

This sequence belongs to the somatotropin/prolactin family.

The protein localises to the secreted. In terms of biological role, growth hormone plays an important role in growth control and is involved in the regulation of several anabolic processes. Implicated as an osmoregulatory substance important for seawater adaptation. The chain is Somatotropin (gh) from Paralichthys olivaceus (Bastard halibut).